The sequence spans 296 residues: Probable transcription factor At1g44810 (296 aa).

Residues 1 to 119 (MNKKLLNPLE…AKKVSGDDDN (119 aa)) are disordered. The segment covering 19–28 (EDVDEEISSG) has biased composition (acidic residues). The span at 52–72 (TQTLNSPSTEAPTLDSGSETN) shows a compositional bias: polar residues. Residues 97 to 119 (RASEGTSSKDIKRAKKVSGDDDN) show a composition bias toward basic and acidic residues.

The protein belongs to the GeBP family.

This is Probable transcription factor At1g44810 from Arabidopsis thaliana (Mouse-ear cress).